Here is a 357-residue protein sequence, read N- to C-terminus: sn-glycerol-3-phosphate import ATP-binding protein UgpC (357 aa).

Positions 4-235 constitute an ABC transporter domain; the sequence is LKLQAVTKSY…PASLFVASFI (232 aa). 37–44 is an ATP binding site; sequence GPSGCGKS.

The protein belongs to the ABC transporter superfamily. sn-glycerol-3-phosphate importer (TC 3.A.1.1.3) family. The complex is composed of two ATP-binding proteins (UgpC), two transmembrane proteins (UgpA and UgpE) and a solute-binding protein (UgpB).

It localises to the cell inner membrane. It carries out the reaction sn-glycerol 3-phosphate(out) + ATP + H2O = sn-glycerol 3-phosphate(in) + ADP + phosphate + H(+). Part of the ABC transporter complex UgpBAEC involved in sn-glycerol-3-phosphate (G3P) import. Responsible for energy coupling to the transport system. The protein is sn-glycerol-3-phosphate import ATP-binding protein UgpC of Pectobacterium atrosepticum (strain SCRI 1043 / ATCC BAA-672) (Erwinia carotovora subsp. atroseptica).